Consider the following 527-residue polypeptide: Coatomer subunit delta (527 aa).

The span at 166–175 (IDKSKIEKNK) shows a compositional bias: basic and acidic residues. Disordered stretches follow at residues 166 to 187 (IDKSKIEKNKPGGFSSMGSMGS) and 217 to 250 (SDVDPINTKPKDRSRSSVTAPPKSSGMKLGKSGK). 2 stretches are compositionally biased toward low complexity: residues 177–187 (GGFSSMGSMGS) and 239–250 (KSSGMKLGKSGK). Positions 282–527 (TDPFTLTVEE…QLIAQNYQVI (246 aa)) constitute an MHD domain.

It belongs to the adaptor complexes medium subunit family. Delta-COP subfamily. In terms of assembly, oligomeric complex that consists of at least the alpha, beta, beta', gamma, delta, epsilon and zeta subunits.

The protein localises to the cytoplasm. It is found in the golgi apparatus membrane. The protein resides in the cytoplasmic vesicle. It localises to the COPI-coated vesicle membrane. In terms of biological role, the coatomer is a cytosolic protein complex that binds to dilysine motifs and reversibly associates with Golgi non-clathrin-coated vesicles, which further mediate biosynthetic protein transport from the ER, via the Golgi up to the trans Golgi network. Coatomer complex is required for budding from Golgi membranes, and is essential for the retrograde Golgi-to-ER transport of dilysine-tagged proteins. In Arabidopsis thaliana (Mouse-ear cress), this protein is Coatomer subunit delta.